The sequence spans 447 residues: Glutamyl-tRNA reductase (447 aa).

Residues 49–52 (TCNR), serine 109, 114–116 (EQQ), and glutamine 120 contribute to the substrate site. Residue cysteine 50 is the Nucleophile of the active site. Residue 189–194 (GAGSMG) participates in NADP(+) binding.

Belongs to the glutamyl-tRNA reductase family. As to quaternary structure, homodimer.

It catalyses the reaction (S)-4-amino-5-oxopentanoate + tRNA(Glu) + NADP(+) = L-glutamyl-tRNA(Glu) + NADPH + H(+). Its pathway is porphyrin-containing compound metabolism; protoporphyrin-IX biosynthesis; 5-aminolevulinate from L-glutamyl-tRNA(Glu): step 1/2. Its function is as follows. Catalyzes the NADPH-dependent reduction of glutamyl-tRNA(Glu) to glutamate 1-semialdehyde (GSA). The protein is Glutamyl-tRNA reductase of Mycobacterium sp. (strain JLS).